The following is a 736-amino-acid chain: Polyribonucleotide nucleotidyltransferase (736 aa).

Mg(2+) is bound by residues Asp-506 and Asp-512. Residues 573–632 (PRLTTIQVPVDAIGLIIGKGGETIRSITEETGAEINIEDDGTVTIACSSVEGTHAALATI) form the KH domain. The S1 motif domain occupies 642-717 (GTIYLGKVRD…GKTRFALSMR (76 aa)).

The protein belongs to the polyribonucleotide nucleotidyltransferase family. The cofactor is Mg(2+).

The protein localises to the cytoplasm. The catalysed reaction is RNA(n+1) + phosphate = RNA(n) + a ribonucleoside 5'-diphosphate. Its function is as follows. Involved in mRNA degradation. Catalyzes the phosphorolysis of single-stranded polyribonucleotides processively in the 3'- to 5'-direction. The chain is Polyribonucleotide nucleotidyltransferase from Chlorobium limicola (strain DSM 245 / NBRC 103803 / 6330).